A 411-amino-acid chain; its full sequence is Anaerobic nitric oxide reductase flavorubredoxin homolog (411 aa).

The segment at 30–210 (LRGSSYNSYL…PFSRLVTPKI (181 aa)) is zinc metallo-hydrolase. Positions 79, 81, 83, 147, 166, 227, 360, 363, 393, and 396 each coordinate Fe cation. The 52-residue stretch at 355–406 (GPRMQCSVCQWIYDPAKGEPMQDVAPGTPWSEVPDNFLCPECSLGKDVFDEL) folds into the Rubredoxin-like domain.

This sequence in the N-terminal section; belongs to the zinc metallo-hydrolase group 3 family. In terms of assembly, homotetramer. Requires Fe cation as cofactor.

Its subcellular location is the cytoplasm. The protein operates within nitrogen metabolism; nitric oxide reduction. Its function is as follows. Anaerobic nitric oxide reductase; uses NADH to detoxify nitric oxide (NO), protecting several 4Fe-4S NO-sensitive enzymes. Has at least 2 reductase partners, only one of which (NorW, flavorubredoxin reductase) has been identified. NO probably binds to the di-iron center. Also able to function as an aerobic oxygen reductase. This Escherichia coli O157:H7 protein is Anaerobic nitric oxide reductase flavorubredoxin homolog.